Here is a 768-residue protein sequence, read N- to C-terminus: Histone-lysine N-methyltransferase, H3 lysine-36 specific (768 aa).

Residues 45-90 enclose the AWS domain; that stretch reads AEVMACDCKPGPTACDEDSGCINRLTSIECVRCCKGCQNKRFQGKK. The SET domain maps to 92 to 209; sequence ASVDVISTEK…RGEEVTFDYN (118 aa). One can recognise a Post-SET domain in the interval 216–232; that stretch reads EAQACYCGEKNCVGFLG. The segment covering 411 to 452 has biased composition (basic and acidic residues); the sequence is KIDPDGDEHSVSRGTSEEVTKESSKSEEPNDVEVVKVNKKAD. Disordered regions lie at residues 411-508, 533-610, and 680-768; these read KIDP…KGWQ, KASR…VNAQ, and VVKR…IDLE. Over residues 453-469 the composition is skewed to polar residues; the sequence is NNGNGVTDSPSTRSESP. The WW domain maps to 501 to 534; it reads RSLPKGWQFANDPQGKVYYYNLELNIQQWDFPKA. 3 stretches are compositionally biased toward basic and acidic residues: residues 555 to 568, 682 to 734, and 755 to 768; these read NRRD…ETRE, KRLE…KGEE, and TVKK…IDLE.

This sequence belongs to the class V-like SAM-binding methyltransferase superfamily. Histone-lysine methyltransferase family. SET2 subfamily.

The protein resides in the nucleus. The protein localises to the chromosome. It carries out the reaction L-lysyl(36)-[histone H3] + 3 S-adenosyl-L-methionine = N(6),N(6),N(6)-trimethyl-L-lysyl(36)-[histone H3] + 3 S-adenosyl-L-homocysteine + 3 H(+). In terms of biological role, histone methyltransferase that trimethylates histone H3 'Lys-36' forming H3K36me3. Involved in transcription elongation as well as in transcription repression. This is Histone-lysine N-methyltransferase, H3 lysine-36 specific (set-2) from Yarrowia lipolytica (strain CLIB 122 / E 150) (Yeast).